The following is a 234-amino-acid chain: 1-(5-phosphoribosyl)-5-[(5-phosphoribosylamino)methylideneamino] imidazole-4-carboxamide isomerase (234 aa).

Residue aspartate 9 is the Proton acceptor of the active site. The active-site Proton donor is the aspartate 131.

The protein belongs to the HisA/HisF family.

The protein localises to the cytoplasm. The catalysed reaction is 1-(5-phospho-beta-D-ribosyl)-5-[(5-phospho-beta-D-ribosylamino)methylideneamino]imidazole-4-carboxamide = 5-[(5-phospho-1-deoxy-D-ribulos-1-ylimino)methylamino]-1-(5-phospho-beta-D-ribosyl)imidazole-4-carboxamide. The protein operates within amino-acid biosynthesis; L-histidine biosynthesis; L-histidine from 5-phospho-alpha-D-ribose 1-diphosphate: step 4/9. In Staphylococcus carnosus (strain TM300), this protein is 1-(5-phosphoribosyl)-5-[(5-phosphoribosylamino)methylideneamino] imidazole-4-carboxamide isomerase.